Reading from the N-terminus, the 590-residue chain is DNA primase (590 aa).

The segment at 37 to 61 (CPFHTEKTPSFIVNPAGAHYHCFGC) adopts a CHC2-type zinc-finger fold. Residues 253 to 333 (KKVILVEGQA…QMSVFVCKLP (81 aa)) form the Toprim domain. Mg(2+)-binding residues include E259, D304, and D306.

This sequence belongs to the DnaG primase family. As to quaternary structure, monomer. Interacts with DnaB. Requires Zn(2+) as cofactor. The cofactor is Mg(2+).

It catalyses the reaction ssDNA + n NTP = ssDNA/pppN(pN)n-1 hybrid + (n-1) diphosphate.. Functionally, RNA polymerase that catalyzes the synthesis of short RNA molecules used as primers for DNA polymerase during DNA replication. The protein is DNA primase of Chlamydia pneumoniae (Chlamydophila pneumoniae).